Here is a 500-residue protein sequence, read N- to C-terminus: Guanosine-5'-triphosphate,3'-diphosphate pyrophosphatase (500 aa).

The protein belongs to the GppA/Ppx family. GppA subfamily.

It catalyses the reaction guanosine 3'-diphosphate 5'-triphosphate + H2O = guanosine 3',5'-bis(diphosphate) + phosphate + H(+). It functions in the pathway purine metabolism; ppGpp biosynthesis; ppGpp from GTP: step 2/2. Catalyzes the conversion of pppGpp to ppGpp. Guanosine pentaphosphate (pppGpp) is a cytoplasmic signaling molecule which together with ppGpp controls the 'stringent response', an adaptive process that allows bacteria to respond to amino acid starvation, resulting in the coordinated regulation of numerous cellular activities. The chain is Guanosine-5'-triphosphate,3'-diphosphate pyrophosphatase from Photorhabdus laumondii subsp. laumondii (strain DSM 15139 / CIP 105565 / TT01) (Photorhabdus luminescens subsp. laumondii).